Reading from the N-terminus, the 302-residue chain is Lysosomal thioesterase PPT2 (302 aa).

An N-terminal signal peptide occupies residues 1–27 (MPGLWRQRLPSAWALLLLPFLPLLLPA). N-linked (GlcNAc...) asparagine glycosylation occurs at asparagine 60. 2 disulfides stabilise this stretch: cysteine 109–cysteine 117 and cysteine 165–cysteine 176. Serine 111 serves as the catalytic Nucleophile. N-linked (GlcNAc...) asparagine glycosylation is found at asparagine 190 and asparagine 206. Aspartate 228 is a catalytic residue. An N-linked (GlcNAc...) asparagine glycan is attached at asparagine 245. Cysteine 276 and cysteine 296 are disulfide-bonded. Residue histidine 283 is part of the active site. N-linked (GlcNAc...) asparagine glycosylation occurs at asparagine 289.

The protein belongs to the palmitoyl-protein thioesterase family.

Its subcellular location is the lysosome. It catalyses the reaction hexadecanoyl-CoA + H2O = hexadecanoate + CoA + H(+). It carries out the reaction S-hexadecanoyl-N-acetylcysteamine + H2O = N-acetylcysteamine + hexadecanoate + H(+). Functionally, catalyzes the cleavage of thioester bonds from S-palmitoyl-CoA or S-palmitoyl-N-acetylcysteamine (unbranched structures) but does not have activity against palmitoylcysteine or palmitoylated proteins, branched structures or bulky head groups. Conversely, hydrolyzes both long and short chain fatty acyl-CoA substrate. The polypeptide is Lysosomal thioesterase PPT2 (Ppt2) (Rattus norvegicus (Rat)).